Reading from the N-terminus, the 74-residue chain is Complement C5a anaphylatoxin (74 aa).

Positions 15–44 (YAMLKKCCYDGAYRNDDETCEERAARIKIG) are involved in C5AR1 binding. Disulfide bonds link cysteine 21–cysteine 47, cysteine 22–cysteine 54, and cysteine 34–cysteine 55. Residues 21-55 (CCYDGAYRNDDETCEERAARIKIGPKCVKAFKDCC) form the Anaphylatoxin-like domain. The tract at residues 72 to 74 (LGR) is required for 90% of C5a activity; although Arg-74 is not essential.

It is found in the secreted. Its function is as follows. Mediator of local inflammatory process released following cleavage by C5 convertase. Acts by binding to its receptor (C5AR1 or C5AR2), activating G protein-coupled receptor signaling and inducing a variety of responses including intracellular calcium release, contraction of smooth muscle, increased vascular permeability, and histamine release from mast cells and basophilic leukocytes. C5a is also a potent chemokine which stimulates the locomotion of polymorphonuclear leukocytes and directs their migration toward sites of inflammation. In Sus scrofa (Pig), this protein is Complement C5a anaphylatoxin (C5).